The sequence spans 462 residues: Nitrate/nitrite transporter NarU (462 aa).

Topologically, residues M1–N35 are cytoplasmic. A helical membrane pass occupies residues L36–V56. Topologically, residues A57–Q71 are periplasmic. The helical transmembrane segment at L72–F92 threads the bilayer. Residues M93–K101 lie on the Cytoplasmic side of the membrane. A helical membrane pass occupies residues W102–Q122. The Periplasmic segment spans residues N123–P124. A helical transmembrane segment spans residues A125–F145. Residues A146–Q180 are Cytoplasmic-facing. A helical membrane pass occupies residues L181–P201. At Q202 to S206 the chain is on the periplasmic side. A helical membrane pass occupies residues L207–A227. At A228–S258 the chain is on the cytoplasmic side. Residues L259–A279 form a helical membrane-spanning segment. The Periplasmic segment spans residues K280–N287. Residues I288 to V308 form a helical membrane-spanning segment. The Cytoplasmic portion of the chain corresponds to I309 to R317. A helical transmembrane segment spans residues V318–P338. Residues G339–G341 are Periplasmic-facing. Residues A342–G362 traverse the membrane as a helical segment. At S363–A401 the chain is on the cytoplasmic side. Residues A402–F422 traverse the membrane as a helical segment. The Periplasmic portion of the chain corresponds to G423–P432. The chain crosses the membrane as a helical span at residues V433–V453. Over Y454–Q462 the chain is Cytoplasmic.

It belongs to the major facilitator superfamily. Nitrate/nitrite porter (TC 2.A.1.8) family.

It localises to the cell inner membrane. Functionally, catalyzes nitrate uptake, nitrite uptake and nitrite export across the cytoplasmic membrane. The protein is Nitrate/nitrite transporter NarU (narU) of Salmonella typhimurium (strain LT2 / SGSC1412 / ATCC 700720).